A 123-amino-acid polypeptide reads, in one-letter code: Ribosome-binding factor A (123 aa).

Belongs to the RbfA family. Monomer. Binds 30S ribosomal subunits, but not 50S ribosomal subunits or 70S ribosomes.

Its subcellular location is the cytoplasm. Its function is as follows. One of several proteins that assist in the late maturation steps of the functional core of the 30S ribosomal subunit. Associates with free 30S ribosomal subunits (but not with 30S subunits that are part of 70S ribosomes or polysomes). Required for efficient processing of 16S rRNA. May interact with the 5'-terminal helix region of 16S rRNA. The chain is Ribosome-binding factor A from Geotalea daltonii (strain DSM 22248 / JCM 15807 / FRC-32) (Geobacter daltonii).